The chain runs to 427 residues: Light-independent protochlorophyllide reductase subunit N (427 aa).

The [4Fe-4S] cluster site is built by Cys28, Cys53, and Cys114.

It belongs to the BchN/ChlN family. In terms of assembly, protochlorophyllide reductase is composed of three subunits; BchL, BchN and BchB. Forms a heterotetramer of two BchB and two BchN subunits. [4Fe-4S] cluster is required as a cofactor.

It carries out the reaction chlorophyllide a + oxidized 2[4Fe-4S]-[ferredoxin] + 2 ADP + 2 phosphate = protochlorophyllide a + reduced 2[4Fe-4S]-[ferredoxin] + 2 ATP + 2 H2O. Its pathway is porphyrin-containing compound metabolism; bacteriochlorophyll biosynthesis (light-independent). Its function is as follows. Component of the dark-operative protochlorophyllide reductase (DPOR) that uses Mg-ATP and reduced ferredoxin to reduce ring D of protochlorophyllide (Pchlide) to form chlorophyllide a (Chlide). This reaction is light-independent. The NB-protein (BchN-BchB) is the catalytic component of the complex. This is Light-independent protochlorophyllide reductase subunit N from Jannaschia sp. (strain CCS1).